A 215-amino-acid chain; its full sequence is Uracil phosphoribosyltransferase (215 aa).

30–34 contributes to the GTP binding site; it reads KGMVR. 5-phospho-alpha-D-ribose 1-diphosphate-binding positions include arginine 80, arginine 105, and 139-147; that span reads DPMIATAST. Uracil is bound by residues isoleucine 202 and 207–209; that span reads GDA. 5-phospho-alpha-D-ribose 1-diphosphate is bound at residue aspartate 208.

This sequence belongs to the UPRTase family. The cofactor is Mg(2+).

The enzyme catalyses UMP + diphosphate = 5-phospho-alpha-D-ribose 1-diphosphate + uracil. The protein operates within pyrimidine metabolism; UMP biosynthesis via salvage pathway; UMP from uracil: step 1/1. Its activity is regulated as follows. Allosterically activated by GTP. Catalyzes the conversion of uracil and 5-phospho-alpha-D-ribose 1-diphosphate (PRPP) to UMP and diphosphate. The sequence is that of Uracil phosphoribosyltransferase from Metallosphaera sedula (strain ATCC 51363 / DSM 5348 / JCM 9185 / NBRC 15509 / TH2).